A 287-amino-acid polypeptide reads, in one-letter code: Probable glucose uptake protein GlcU (287 aa).

9 helical membrane passes run 7–29, 34–56, 58–75, 114–136, 156–178, 183–202, 209–228, 233–255, and 267–286; these read LIAL…VGGG, IRGT…FAKF, NPTV…WAFG, WSSM…GVAL, MGIL…IFGV, ALFF…SMNH, TALN…FMFY, VGVA…GGIF, and TGIW…LGNL.

It belongs to the GRP transporter (TC 2.A.7.5) family.

It is found in the cell membrane. In terms of biological role, involved in the uptake of glucose. In Staphylococcus aureus (strain MRSA252), this protein is Probable glucose uptake protein GlcU (glcU).